A 217-amino-acid chain; its full sequence is Putative thymidylate synthase (217 aa).

Cys-139 is a catalytic residue.

The protein belongs to the thymidylate synthase family. Archaeal-type ThyA subfamily. Monomer.

It is found in the cytoplasm. It participates in pyrimidine metabolism; dTTP biosynthesis. May catalyze the biosynthesis of dTMP using an unknown cosubstrate. In Methanosarcina acetivorans (strain ATCC 35395 / DSM 2834 / JCM 12185 / C2A), this protein is Putative thymidylate synthase.